The chain runs to 142 residues: MLKHKIIGLDVGSKTVGIAISDLMGWTAQGLDTLRIDEENNELGIEALVKIIKRDNVGTVVIGLPKNMNNSIGFRGEASLQYKEQLQEALPSLEIIMWDERLSTMAAERSLLEADVSRQKRKKVIDKMAAVFILQGYLDSLQ.

Belongs to the YqgF nuclease family.

The protein localises to the cytoplasm. Could be a nuclease involved in processing of the 5'-end of pre-16S rRNA. The polypeptide is Putative pre-16S rRNA nuclease (Staphylococcus saprophyticus subsp. saprophyticus (strain ATCC 15305 / DSM 20229 / NCIMB 8711 / NCTC 7292 / S-41)).